The sequence spans 161 residues: Peroxynitrite isomerase 2 (161 aa).

Residues 17–23 carry the GXWXGXG motif; the sequence is GTWAGQG. Residue histidine 152 coordinates heme b.

It belongs to the nitrobindin family. In terms of assembly, homodimer. The cofactor is heme b.

It carries out the reaction peroxynitrite = nitrate. The protein operates within nitrogen metabolism. Functionally, heme-binding protein able to scavenge peroxynitrite and to protect free L-tyrosine against peroxynitrite-mediated nitration, by acting as a peroxynitrite isomerase that converts peroxynitrite to nitrate. Therefore, this protein likely plays a role in peroxynitrite sensing and in the detoxification of reactive nitrogen and oxygen species (RNS and ROS, respectively). Is able to bind nitric oxide (NO) in vitro, but may act as a sensor of peroxynitrite levels in vivo. The polypeptide is Peroxynitrite isomerase 2 (Mycobacterium ulcerans (strain Agy99)).